The chain runs to 292 residues: Shikimate dehydrogenase (NADP(+)) (292 aa).

Shikimate contacts are provided by residues 25-27 (SKS) and Thr-72. Residue Lys-76 is the Proton acceptor of the active site. The shikimate site is built by Asn-97 and Asp-113. Residues 137–141 (GAGGA), 161–166 (NRTQSK), and Met-230 each bind NADP(+). Tyr-232 lines the shikimate pocket. Gly-254 contributes to the NADP(+) binding site.

It belongs to the shikimate dehydrogenase family. In terms of assembly, homodimer.

The enzyme catalyses shikimate + NADP(+) = 3-dehydroshikimate + NADPH + H(+). It functions in the pathway metabolic intermediate biosynthesis; chorismate biosynthesis; chorismate from D-erythrose 4-phosphate and phosphoenolpyruvate: step 4/7. In terms of biological role, involved in the biosynthesis of the chorismate, which leads to the biosynthesis of aromatic amino acids. Catalyzes the reversible NADPH linked reduction of 3-dehydroshikimate (DHSA) to yield shikimate (SA). This Shewanella sp. (strain MR-7) protein is Shikimate dehydrogenase (NADP(+)).